A 243-amino-acid polypeptide reads, in one-letter code: UPF0246 protein MGAS10750_Spy1880 (243 aa).

It belongs to the UPF0246 family.

The polypeptide is UPF0246 protein MGAS10750_Spy1880 (Streptococcus pyogenes serotype M4 (strain MGAS10750)).